The following is a 500-amino-acid chain: Probable cytosol aminopeptidase (500 aa).

Residues Lys-268 and Asp-273 each contribute to the Mn(2+) site. The active site involves Lys-280. Mn(2+) contacts are provided by Asp-291, Asp-350, and Glu-352. Arg-354 is a catalytic residue.

This sequence belongs to the peptidase M17 family. Requires Mn(2+) as cofactor.

The protein localises to the cytoplasm. It catalyses the reaction Release of an N-terminal amino acid, Xaa-|-Yaa-, in which Xaa is preferably Leu, but may be other amino acids including Pro although not Arg or Lys, and Yaa may be Pro. Amino acid amides and methyl esters are also readily hydrolyzed, but rates on arylamides are exceedingly low.. The catalysed reaction is Release of an N-terminal amino acid, preferentially leucine, but not glutamic or aspartic acids.. Its function is as follows. Presumably involved in the processing and regular turnover of intracellular proteins. Catalyzes the removal of unsubstituted N-terminal amino acids from various peptides. This chain is Probable cytosol aminopeptidase, found in Alkaliphilus metalliredigens (strain QYMF).